Reading from the N-terminus, the 367-residue chain is MSLSRVSVTGVRNLHPVTLSPSPRINILYGANGSGKTSVLEAIHLLGIARSFRSSRLLPVIQYEQPSCTVFGQVDLAQGGHSNLGVSRDRQGEFQIRIDGQNARSAAQLAEILPLQLINPDSFRLLEGAPKIRRQFLDWGVFHVEPRFMSTWQRLQKALKQRNSWLRHGTLDAASQAAWDRELCLASDEIDEFRRAYIKALKPVFEKTLSELVELEGLTLSYYRGWDKEKELSTVLASSLNRDQQMGHTQAGPQRADLRLRLGAHNAADILSRGQQKLVVCALRIAQGHLVSQVRRGQCIYLVDDLPSELDDNHRRALCRLLEELRCQVFITCVDQEFLREGWQTDTPVALFHVEQGRITQTHDHRE.

30 to 37 lines the ATP pocket; it reads GANGSGKT.

It belongs to the RecF family.

The protein resides in the cytoplasm. The RecF protein is involved in DNA metabolism; it is required for DNA replication and normal SOS inducibility. RecF binds preferentially to single-stranded, linear DNA. It also seems to bind ATP. In Pseudomonas syringae pv. tomato (strain ATCC BAA-871 / DC3000), this protein is DNA replication and repair protein RecF.